The following is a 494-amino-acid chain: Serine/threonine-protein kinase PBL13 (494 aa).

Cys4 is lipidated: S-palmitoyl cysteine. Phosphothreonine is present on Thr65. In terms of domain architecture, Protein kinase spans 76–356 (FSSSNFLGEG…STVVSVLQDI (281 aa)). ATP contacts are provided by residues 82-90 (LGEGGFGPV) and Lys111. Tyr156 is subject to Phosphotyrosine. The Proton acceptor role is filled by Asp206. Ser210 is modified (phosphoserine). Ser240 carries the phosphoserine; by autocatalysis modification. Phosphothreonine occurs at positions 241 and 246. Tyr254 bears the Phosphotyrosine mark. A Phosphoserine; by autocatalysis modification is found at Ser321. A phosphothreonine; by autocatalysis mark is found at Thr323 and Thr383. Ser384 carries the post-translational modification Phosphoserine; by autocatalysis. Phosphothreonine; by autocatalysis occurs at positions 395, 398, 406, 413, 421, and 428. Ser429 is subject to Phosphoserine; by autocatalysis. Positions 434-471 (DKTRREVKETSLQNFDKPRNVSTTDNHQKFRSPAHTAR) are disordered. Phosphothreonine; by autocatalysis is present on Thr443. Polar residues predominate over residues 443–458 (TSLQNFDKPRNVSTTD). Residues Ser444 and Ser455 each carry the phosphoserine; by autocatalysis modification. The residue at position 456 (Thr456) is a Phosphothreonine; by autocatalysis. The span at 462–471 (KFRSPAHTAR) shows a compositional bias: basic residues. Tyr481 bears the Phosphotyrosine; by autocatalysis mark.

Belongs to the protein kinase superfamily. Ser/Thr protein kinase family. As to quaternary structure, interacts with RBHOD. Interaction is disrupted by flagellin-induced immune signaling.

It localises to the cell membrane. It carries out the reaction L-seryl-[protein] + ATP = O-phospho-L-seryl-[protein] + ADP + H(+). The catalysed reaction is L-threonyl-[protein] + ATP = O-phospho-L-threonyl-[protein] + ADP + H(+). In terms of biological role, involved in defense responses. Acts as a negative regulator of plant immune responses. This is Serine/threonine-protein kinase PBL13 from Arabidopsis thaliana (Mouse-ear cress).